The sequence spans 460 residues: Tyrosine-protein phosphatase non-receptor type 18 (460 aa).

Residues 26–291 (LAGEFSDIQA…RFLYHTVAQM (266 aa)) enclose the Tyrosine-protein phosphatase domain. Substrate is bound by residues Asp-197, 229-235 (CSAGCGR), and Gln-276. Cys-229 serves as the catalytic Phosphocysteine intermediate. Residues 361–460 (GAPAGAGSGT…RDPPAEWTRV (100 aa)) form a disordered region. Gly residues predominate over residues 364 to 378 (AGAGSGTQTGTGTGT). A Phosphotyrosine modification is found at Tyr-389. At Thr-393 the chain carries Phosphothreonine. Tyr-426 is subject to Phosphotyrosine. Basic and acidic residues predominate over residues 449-460 (GPRDPPAEWTRV).

This sequence belongs to the protein-tyrosine phosphatase family. Non-receptor class 4 subfamily. As to quaternary structure, interacts with PSTPIP1. Expressed in brain, colon and several tumor-derived cell lines.

It localises to the nucleus. Its subcellular location is the cytoplasm. It carries out the reaction O-phospho-L-tyrosyl-[protein] + H2O = L-tyrosyl-[protein] + phosphate. Functionally, differentially dephosphorylate autophosphorylated tyrosine kinases which are known to be overexpressed in tumor tissues. The chain is Tyrosine-protein phosphatase non-receptor type 18 (PTPN18) from Homo sapiens (Human).